A 73-amino-acid polypeptide reads, in one-letter code: U3-agatoxin-Ao1k (73 aa).

Residues 1-20 (MRTIISLLLLSAMVFAVIEA) form the signal peptide. Residues 21–34 (ISLEEGLQLFEGER) constitute a propeptide that is removed on maturation. 4 disulfide bridges follow: Cys36–Cys52, Cys43–Cys57, Cys51–Cys67, and Cys59–Cys65. Ser71 carries the serine amide modification.

Belongs to the neurotoxin 07 (Beta/delta-agtx) family. 03 (aga-4) subfamily. Aga sub-subfamily. Expressed by the venom gland.

Its subcellular location is the secreted. Its function is as follows. Insecticidal neurotoxin that modulates the insect Nav channel (DmNaV1/tipE (para/tipE)) in a unique manner, with both the activation and inactivation processes being affected. The voltage dependence of activation is shifted toward more hyperpolarized potentials (analogous to site 4 toxins) and a non-inactivating persistent sodium current is induced (site 3-like action). Interestingly, both effects take place in a voltage-dependent manner, producing a bell-shaped curve between -80 and 0 mV. Compared to beta/delta-agatoxin-1 to -3, this toxin appears to affect the insect sodium channel only weakly. This chain is U3-agatoxin-Ao1k, found in Agelena orientalis (Funnel-web spider).